A 500-amino-acid chain; its full sequence is Glycerol kinase (500 aa).

Residue T13 coordinates ADP. 3 residues coordinate ATP: T13, T14, and S15. T13 is a sn-glycerol 3-phosphate binding site. R17 provides a ligand contact to ADP. Residues R83, E84, Y135, and D244 each coordinate sn-glycerol 3-phosphate. 5 residues coordinate glycerol: R83, E84, Y135, D244, and Q245. Positions 266 and 309 each coordinate ADP. The ATP site is built by T266, G309, Q313, and G410. The ADP site is built by G410 and N414.

Belongs to the FGGY kinase family.

The catalysed reaction is glycerol + ATP = sn-glycerol 3-phosphate + ADP + H(+). Its pathway is polyol metabolism; glycerol degradation via glycerol kinase pathway; sn-glycerol 3-phosphate from glycerol: step 1/1. With respect to regulation, inhibited by fructose 1,6-bisphosphate (FBP). In terms of biological role, key enzyme in the regulation of glycerol uptake and metabolism. Catalyzes the phosphorylation of glycerol to yield sn-glycerol 3-phosphate. This Burkholderia multivorans (strain ATCC 17616 / 249) protein is Glycerol kinase.